Reading from the N-terminus, the 1766-residue chain is Putative ATP-dependent RNA helicase R366 (1766 aa).

Residues 209–239 (KSSSNQNSNQSNQESNESNQEPNESNQEINQ) form a disordered region. A compositionally biased stretch (low complexity) spans 210–239 (SSSNQNSNQSNQESNESNQEPNESNQEINQ). Residues 656–865 (YHHYSNNRVL…RYYRRINDNR (210 aa)) enclose the Helicase ATP-binding domain. 669-676 (GATGVGKS) provides a ligand contact to ATP. The short motif at 812-815 (DEAH) is the DEAH box element. Residues 947–1116 (DIHKSIKAIN…TMVKLIKSYP (170 aa)) enclose the Helicase C-terminal domain.

Belongs to the DEAD box helicase family. DEAH subfamily.

It catalyses the reaction ATP + H2O = ADP + phosphate + H(+). In Acanthamoeba polyphaga mimivirus (APMV), this protein is Putative ATP-dependent RNA helicase R366.